The primary structure comprises 298 residues: Probable GTP 3',8-cyclase (298 aa).

One can recognise a Radical SAM core domain in the interval 4-221 (RYGREIRSFR…VFTRKFMQNR (218 aa)). Arg13 is a GTP binding site. 2 residues coordinate [4Fe-4S] cluster: Cys20 and Cys24. Tyr26 is an S-adenosyl-L-methionine binding site. Cys27 lines the [4Fe-4S] cluster pocket. Residue Lys61 coordinates GTP. Gly65 lines the S-adenosyl-L-methionine pocket. Residue Thr91 coordinates GTP. An S-adenosyl-L-methionine-binding site is contributed by Ser115. Lys152 contacts GTP. [4Fe-4S] cluster-binding residues include Cys243 and Cys246. A GTP-binding site is contributed by 248–250 (RIR). Cys260 contacts [4Fe-4S] cluster.

Belongs to the radical SAM superfamily. MoaA family. Requires [4Fe-4S] cluster as cofactor.

The enzyme catalyses GTP + AH2 + S-adenosyl-L-methionine = (8S)-3',8-cyclo-7,8-dihydroguanosine 5'-triphosphate + 5'-deoxyadenosine + L-methionine + A + H(+). It participates in cofactor biosynthesis; molybdopterin biosynthesis. Its function is as follows. Catalyzes the cyclization of GTP to (8S)-3',8-cyclo-7,8-dihydroguanosine 5'-triphosphate. The protein is Probable GTP 3',8-cyclase of Methanococcus maripaludis (strain C7 / ATCC BAA-1331).